The chain runs to 226 residues: Charged multivesicular body protein 4 (226 aa).

Residues 22-88 adopt a coiled-coil conformation; the sequence is IQKLRETENM…DGTLSTIEMQ (67 aa). Positions 169-226 are disordered; the sequence is QENFDKEIIGIPEPTPTLPEAPTEDLPEKAKEKKKATTTTAVEDDDDPDMKQLLSWSN.

Belongs to the SNF7 family. Homopolymer; forms elongated striated filaments of uniform ~10nm width. Monomers interact in a staggered arrangement mediated by complementary charged electrostatic surfaces. Interacts with l(2)gd1 (via DM14 domains 1 and 3); the interaction is direct and blocks access to the surface involved in homopolymerization. This interaction may be required for the ESCRT-III complex role in multivesicular body formation. As to expression, expressed at considerably higher levels in testis than in ovary. Expressed in midgut, eye, mouthparts and male accessory gland.

The protein localises to the endosome. The protein resides in the multivesicular body. It localises to the midbody. Its activity is regulated as follows. May be regulated by aurB/Aurora kinase B-dependent phosphorylation. Probable core polymerisation component of the endosomal sorting required for transport (ESCRT) III complex involved in multiple cellular processes requiring the outward bending of membranes, including vesicle budding, membrane repair and cytokinesis. The ESCRT pathway involves 4 complexes (ESCRT-0, -I, -II and -III) that sequentially assemble on the cytoplasmic side of membranes and induce membrane remodeling, budding and scission. As part of the ESCRT-III complex, involved in the budding of intraluminal vesicles (ILVs) into endosomes to form multivesicular bodies (MVBs), which target their contents for degradation via the endolysosomal pathway. Involved in regulation of signal transduction pathways, including the Notch and BMP/decapentaplegic (dpp) pathways, by sequestering the intracellular domains of activated receptors into ILVs, isolating them from the cytoplasm and targeting them for lysosomal degradation. Involved in targeting ubiquitilated proteins, such as mono-ubiquitilanated N/Notch, to MVBs for degradation. Plays a role in wing development by regulating Notch signaling. Involved in abscission of germline cells during oogenesis. Involved in spermiogenesis. Required for efficient cytoplasmic isolation and abscission during cytokinesis of epithelial sensory organ precursor cells. May be involved in septate junction remodeling and maintenance. The polypeptide is Charged multivesicular body protein 4 (Drosophila melanogaster (Fruit fly)).